Here is a 356-residue protein sequence, read N- to C-terminus: S-adenosylmethionine:tRNA ribosyltransferase-isomerase (356 aa).

Belongs to the QueA family. As to quaternary structure, monomer.

It localises to the cytoplasm. It catalyses the reaction 7-aminomethyl-7-carbaguanosine(34) in tRNA + S-adenosyl-L-methionine = epoxyqueuosine(34) in tRNA + adenine + L-methionine + 2 H(+). It participates in tRNA modification; tRNA-queuosine biosynthesis. In terms of biological role, transfers and isomerizes the ribose moiety from AdoMet to the 7-aminomethyl group of 7-deazaguanine (preQ1-tRNA) to give epoxyqueuosine (oQ-tRNA). The chain is S-adenosylmethionine:tRNA ribosyltransferase-isomerase from Citrobacter koseri (strain ATCC BAA-895 / CDC 4225-83 / SGSC4696).